The chain runs to 125 residues: Small ribosomal subunit protein uS12 (125 aa).

Asp89 is modified (3-methylthioaspartic acid). A disordered region spans residues 104 to 125; it reads TAGVKDRSQSRSKYGAKASKQD.

This sequence belongs to the universal ribosomal protein uS12 family. Part of the 30S ribosomal subunit. Contacts proteins S8 and S17. May interact with IF1 in the 30S initiation complex.

With S4 and S5 plays an important role in translational accuracy. Functionally, interacts with and stabilizes bases of the 16S rRNA that are involved in tRNA selection in the A site and with the mRNA backbone. Located at the interface of the 30S and 50S subunits, it traverses the body of the 30S subunit contacting proteins on the other side and probably holding the rRNA structure together. The combined cluster of proteins S8, S12 and S17 appears to hold together the shoulder and platform of the 30S subunit. This is Small ribosomal subunit protein uS12 from Prochlorococcus marinus (strain MIT 9303).